We begin with the raw amino-acid sequence, 206 residues long: ATP-dependent Clp protease proteolytic subunit (206 aa).

Ser110 functions as the Nucleophile in the catalytic mechanism. His135 is an active-site residue.

It belongs to the peptidase S14 family. As to quaternary structure, fourteen ClpP subunits assemble into 2 heptameric rings which stack back to back to give a disk-like structure with a central cavity, resembling the structure of eukaryotic proteasomes.

Its subcellular location is the cytoplasm. The enzyme catalyses Hydrolysis of proteins to small peptides in the presence of ATP and magnesium. alpha-casein is the usual test substrate. In the absence of ATP, only oligopeptides shorter than five residues are hydrolyzed (such as succinyl-Leu-Tyr-|-NHMec, and Leu-Tyr-Leu-|-Tyr-Trp, in which cleavage of the -Tyr-|-Leu- and -Tyr-|-Trp bonds also occurs).. Functionally, cleaves peptides in various proteins in a process that requires ATP hydrolysis. Has a chymotrypsin-like activity. Plays a major role in the degradation of misfolded proteins. The chain is ATP-dependent Clp protease proteolytic subunit from Edwardsiella ictaluri (strain 93-146).